We begin with the raw amino-acid sequence, 61 residues long: Transmembrane protein 300R (61 aa).

2 helical membrane-spanning segments follow: residues 5–25 and 35–55; these read FLDL…FYLT and SLSY…IYLQ.

Its subcellular location is the membrane. This Invertebrate iridescent virus 6 (IIV-6) protein is Transmembrane protein 300R.